Here is a 239-residue protein sequence, read N- to C-terminus: Probable transcriptional regulatory protein Ajs_1898 (239 aa).

The disordered stretch occupies residues 1 to 21; it reads MAGHSKWANIQHRKGRQDEKR.

This sequence belongs to the TACO1 family.

The protein resides in the cytoplasm. The sequence is that of Probable transcriptional regulatory protein Ajs_1898 from Acidovorax sp. (strain JS42).